A 303-amino-acid polypeptide reads, in one-letter code: Probable endonuclease 4 (303 aa).

9 residues coordinate Zn(2+): His-75, His-115, Glu-151, Asp-185, His-188, His-221, Asp-234, His-236, and Glu-266.

This sequence belongs to the AP endonuclease 2 family. Zn(2+) is required as a cofactor.

The enzyme catalyses Endonucleolytic cleavage to 5'-phosphooligonucleotide end-products.. Endonuclease IV plays a role in DNA repair. It cleaves phosphodiester bonds at apurinic or apyrimidinic (AP) sites, generating a 3'-hydroxyl group and a 5'-terminal sugar phosphate. This Ureaplasma parvum serovar 3 (strain ATCC 700970) protein is Probable endonuclease 4.